We begin with the raw amino-acid sequence, 351 residues long: Phosphate acyltransferase (351 aa).

It belongs to the PlsX family. As to quaternary structure, homodimer. Probably interacts with PlsY.

The protein resides in the cytoplasm. It carries out the reaction a fatty acyl-[ACP] + phosphate = an acyl phosphate + holo-[ACP]. It participates in lipid metabolism; phospholipid metabolism. In terms of biological role, catalyzes the reversible formation of acyl-phosphate (acyl-PO(4)) from acyl-[acyl-carrier-protein] (acyl-ACP). This enzyme utilizes acyl-ACP as fatty acyl donor, but not acyl-CoA. This Verminephrobacter eiseniae (strain EF01-2) protein is Phosphate acyltransferase.